The sequence spans 434 residues: Enolase (434 aa).

Substrate contacts are provided by His-158 and Glu-167. Glu-210 (proton donor) is an active-site residue. The Mg(2+) site is built by Asp-245, Glu-294, and Asp-319. Substrate-binding residues include Glu-294 and Asp-319. The Proton acceptor role is filled by Lys-344. Substrate contacts are provided by residues 371 to 374 (SHRS) and Lys-395.

Belongs to the enolase family. In terms of assembly, homodimer. Requires Mg(2+) as cofactor.

Its subcellular location is the cytoplasm. It catalyses the reaction (2R)-2-phosphoglycerate = phosphoenolpyruvate + H2O. It participates in carbohydrate degradation; glycolysis; pyruvate from D-glyceraldehyde 3-phosphate: step 4/5. The polypeptide is Enolase (ENO) (Schistosoma mansoni (Blood fluke)).